The following is a 544-amino-acid chain: Glucans biosynthesis protein G 1 (544 aa).

An N-terminal signal peptide occupies residues 1-33 (MVSLLRCQSFKPSSIICSLALSAAFALSGTAFA). The tract at residues 36–58 (SKPAENKPATPVVSPPKATAPSA) is disordered.

Belongs to the OpgD/OpgG family.

It localises to the periplasm. The protein operates within glycan metabolism; osmoregulated periplasmic glucan (OPG) biosynthesis. Involved in the biosynthesis of osmoregulated periplasmic glucans (OPGs). In Shewanella oneidensis (strain ATCC 700550 / JCM 31522 / CIP 106686 / LMG 19005 / NCIMB 14063 / MR-1), this protein is Glucans biosynthesis protein G 1 (opgG1).